We begin with the raw amino-acid sequence, 423 residues long: UDP-N-acetylglucosamine 1-carboxyvinyltransferase 1 (423 aa).

23 to 24 (KN) is a phosphoenolpyruvate binding site. Arg96 lines the UDP-N-acetyl-alpha-D-glucosamine pocket. The active-site Proton donor is the Cys120. Cys120 carries the post-translational modification 2-(S-cysteinyl)pyruvic acid O-phosphothioketal. Asp309 and Val331 together coordinate UDP-N-acetyl-alpha-D-glucosamine.

Belongs to the EPSP synthase family. MurA subfamily.

Its subcellular location is the cytoplasm. It carries out the reaction phosphoenolpyruvate + UDP-N-acetyl-alpha-D-glucosamine = UDP-N-acetyl-3-O-(1-carboxyvinyl)-alpha-D-glucosamine + phosphate. Its pathway is cell wall biogenesis; peptidoglycan biosynthesis. Its function is as follows. Cell wall formation. Adds enolpyruvyl to UDP-N-acetylglucosamine. This is UDP-N-acetylglucosamine 1-carboxyvinyltransferase 1 from Streptococcus pyogenes serotype M1.